The chain runs to 204 residues: Thymidylate kinase (204 aa).

Gly11–Thr18 provides a ligand contact to ATP.

It belongs to the thymidylate kinase family.

The enzyme catalyses dTMP + ATP = dTDP + ADP. The protein operates within pyrimidine metabolism; dTTP biosynthesis. The protein is Thymidylate kinase (TMK) of Ectromelia virus (strain Moscow) (ECTV).